Reading from the N-terminus, the 33-residue chain is Protamine TP14 (33 aa).

The segment at 1-33 (MPRRRRSSRPPVRRRRRPRVSRRRRRRGGRRRR) is disordered.

Testis.

The protein localises to the nucleus. Its subcellular location is the chromosome. Protamines substitute for histones in the chromatin of sperm during the haploid phase of spermatogenesis. They compact sperm DNA into a highly condensed, stable and inactive complex. The chain is Protamine TP14 from Oncorhynchus mykiss (Rainbow trout).